The sequence spans 56 residues: Protein hunchback (56 aa).

C2H2-type zinc fingers lie at residues histidine 1–histidine 5, phenylalanine 11–histidine 33, and phenylalanine 39–leucine 56.

The protein belongs to the hunchback C2H2-type zinc-finger protein family.

Its subcellular location is the nucleus. In terms of biological role, gap class segmentation protein that controls development of head structures. The polypeptide is Protein hunchback (hb) (Euscelis plebejus (Leafhopper)).